We begin with the raw amino-acid sequence, 215 residues long: Adenylate kinase (215 aa).

10-15 (GAGKGT) is a binding site for ATP. The NMP stretch occupies residues 30–59 (STGDIFRANISGKTELGMKAKGYMDKGLLV). AMP is bound by residues Thr-31, Arg-36, 57 to 59 (LLV), 85 to 88 (GFPR), and Gln-92. Residues 126–163 (GRRVCSKCGASYHIEYNPTKVEGICDLCGSPVVQRKDD) form an LID region. Position 127 (Arg-127) interacts with ATP. Residues Cys-130 and Cys-133 each contribute to the Zn(2+) site. 136-137 (SY) provides a ligand contact to ATP. Residues Cys-150 and Cys-153 each contribute to the Zn(2+) site. AMP-binding residues include Arg-160 and Arg-171. An ATP-binding site is contributed by Gln-199.

It belongs to the adenylate kinase family. As to quaternary structure, monomer.

The protein localises to the cytoplasm. The catalysed reaction is AMP + ATP = 2 ADP. It participates in purine metabolism; AMP biosynthesis via salvage pathway; AMP from ADP: step 1/1. Functionally, catalyzes the reversible transfer of the terminal phosphate group between ATP and AMP. Plays an important role in cellular energy homeostasis and in adenine nucleotide metabolism. The polypeptide is Adenylate kinase (Clostridium acetobutylicum (strain ATCC 824 / DSM 792 / JCM 1419 / IAM 19013 / LMG 5710 / NBRC 13948 / NRRL B-527 / VKM B-1787 / 2291 / W)).